The following is a 66-amino-acid chain: Large ribosomal subunit protein bL35c (66 aa).

The protein belongs to the bacterial ribosomal protein bL35 family.

Its subcellular location is the plastid. The protein resides in the chloroplast. The sequence is that of Large ribosomal subunit protein bL35c from Gracilaria tenuistipitata var. liui (Red alga).